The sequence spans 367 residues: Peptide chain release factor 2 (367 aa).

Gln-249 carries the N5-methylglutamine modification.

This sequence belongs to the prokaryotic/mitochondrial release factor family. Post-translationally, methylated by PrmC. Methylation increases the termination efficiency of RF2.

The protein localises to the cytoplasm. Its function is as follows. Peptide chain release factor 2 directs the termination of translation in response to the peptide chain termination codons UGA and UAA. The polypeptide is Peptide chain release factor 2 (Thermotoga petrophila (strain ATCC BAA-488 / DSM 13995 / JCM 10881 / RKU-1)).